We begin with the raw amino-acid sequence, 317 residues long: MPMQGAQRKLLGSLNSTPTATSNLGLAANHTGAPCLEVSIPDGLFLSLGLVSLVENVLVVAAIAKNRNLHSSMYCFICCLALSDLLVSGSNMLETAVILLLEAGALATRTSAVQRLHNTIDVLTCSSMLCSLCFLGAIAVDRYISIFYALRYHSIVTLPRTQRVIAAIWVASVLSSTLFITYYDHAAVLLCLVVFFLAMLVLMAVLYVHMLARACQHAHGIIRLHKRQSPAHQGFGLRGAATLTILLGIFFLCWGPFFLHLTLVVFCPQHLTCSCIFKNFKVFLTLIICNTIIDPLIYAFRSQELRRTLKEVLLCSW.

Topologically, residues 1 to 37 (MPMQGAQRKLLGSLNSTPTATSNLGLAANHTGAPCLE) are extracellular. Residue Asn29 is glycosylated (N-linked (GlcNAc...) asparagine). Residues 38-63 (VSIPDGLFLSLGLVSLVENVLVVAAI) form a helical membrane-spanning segment. At 64 to 72 (AKNRNLHSS) the chain is on the cytoplasmic side. A helical transmembrane segment spans residues 73 to 93 (MYCFICCLALSDLLVSGSNML). At 94–118 (ETAVILLLEAGALATRTSAVQRLHN) the chain is on the extracellular side. A helical membrane pass occupies residues 119–140 (TIDVLTCSSMLCSLCFLGAIAV). Residues 141 to 163 (DRYISIFYALRYHSIVTLPRTQR) lie on the Cytoplasmic side of the membrane. The helical transmembrane segment at 164–183 (VIAAIWVASVLSSTLFITYY) threads the bilayer. Residues 184–191 (DHAAVLLC) lie on the Extracellular side of the membrane. A helical membrane pass occupies residues 192 to 211 (LVVFFLAMLVLMAVLYVHML). At 212–240 (ARACQHAHGIIRLHKRQSPAHQGFGLRGA) the chain is on the cytoplasmic side. The helical transmembrane segment at 241-266 (ATLTILLGIFFLCWGPFFLHLTLVVF) threads the bilayer. Over 267-279 (CPQHLTCSCIFKN) the chain is Extracellular. Residues 280-300 (FKVFLTLIICNTIIDPLIYAF) traverse the membrane as a helical segment. The Cytoplasmic segment spans residues 301 to 317 (RSQELRRTLKEVLLCSW). Cys315 is lipidated: S-palmitoyl cysteine.

It belongs to the G-protein coupled receptor 1 family. As to quaternary structure, interacts with MGRN1, but does not undergo MGRN1-mediated ubiquitination; this interaction competes with GNAS-binding and thus inhibits agonist-induced cAMP production. Interacts with OPN3; the interaction results in a decrease in MC1R-mediated cAMP signaling and ultimately a decrease in melanin production in melanocytes.

The protein resides in the cell membrane. Functionally, receptor for MSH (alpha, beta and gamma) and ACTH. The activity of this receptor is mediated by G proteins which activate adenylate cyclase. Mediates melanogenesis, the production of eumelanin (black/brown) and phaeomelanin (red/yellow), via regulation of cAMP signaling in melanocytes. This is Melanocyte-stimulating hormone receptor (MC1R) from Saguinus imperator (Emperor tamarin).